The following is a 500-amino-acid chain: Lysine--tRNA ligase (500 aa).

Positions 410 and 417 each coordinate Mg(2+).

It belongs to the class-II aminoacyl-tRNA synthetase family. Homodimer. Mg(2+) is required as a cofactor.

It is found in the cytoplasm. The enzyme catalyses tRNA(Lys) + L-lysine + ATP = L-lysyl-tRNA(Lys) + AMP + diphosphate. The polypeptide is Lysine--tRNA ligase (Shewanella denitrificans (strain OS217 / ATCC BAA-1090 / DSM 15013)).